The sequence spans 71 residues: Small ribosomal subunit protein bS21 (71 aa).

This sequence belongs to the bacterial ribosomal protein bS21 family.

This is Small ribosomal subunit protein bS21 from Hydrogenovibrio crunogenus (strain DSM 25203 / XCL-2) (Thiomicrospira crunogena).